A 446-amino-acid polypeptide reads, in one-letter code: N-succinylarginine dihydrolase (446 aa).

Residues 19-28, N110, and 137-138 each bind substrate; these read AGLSFGNVAS and HR. Residue E174 is part of the active site. R213 is a substrate binding site. H249 is a catalytic residue. D251 and N364 together coordinate substrate. Catalysis depends on C370, which acts as the Nucleophile.

This sequence belongs to the succinylarginine dihydrolase family. As to quaternary structure, homodimer.

It catalyses the reaction N(2)-succinyl-L-arginine + 2 H2O + 2 H(+) = N(2)-succinyl-L-ornithine + 2 NH4(+) + CO2. Its pathway is amino-acid degradation; L-arginine degradation via AST pathway; L-glutamate and succinate from L-arginine: step 2/5. Its function is as follows. Catalyzes the hydrolysis of N(2)-succinylarginine into N(2)-succinylornithine, ammonia and CO(2). The chain is N-succinylarginine dihydrolase from Burkholderia pseudomallei (strain 668).